The primary structure comprises 490 residues: Cytochrome P450 2C25 (490 aa).

Position 435 (Cys435) interacts with heme.

It belongs to the cytochrome P450 family. It depends on heme as a cofactor.

It is found in the endoplasmic reticulum membrane. Its subcellular location is the microsome membrane. The enzyme catalyses an organic molecule + reduced [NADPH--hemoprotein reductase] + O2 = an alcohol + oxidized [NADPH--hemoprotein reductase] + H2O + H(+). Functionally, catalyzes the hydroxylation of tolbutamide and the N-demethylation of aminopyrine and benzphetamine. Also has testosterone hydroxylase (16 beta) activity. The protein is Cytochrome P450 2C25 (CYP2C25) of Mesocricetus auratus (Golden hamster).